A 232-amino-acid polypeptide reads, in one-letter code: Ribonuclease 3 (232 aa).

Positions 5-134 (QTVLKNHFAI…FLGALLLDKD (130 aa)) constitute an RNase III domain. Residue E47 coordinates Mg(2+). D51 is a catalytic residue. Mg(2+) contacts are provided by D120 and E123. E123 is an active-site residue. The DRBM domain occupies 160–229 (DYKTHLQELL…AKNAVEKGLD (70 aa)).

Belongs to the ribonuclease III family. Homodimer. It depends on Mg(2+) as a cofactor.

It is found in the cytoplasm. The catalysed reaction is Endonucleolytic cleavage to 5'-phosphomonoester.. Functionally, digests double-stranded RNA. Involved in the processing of primary rRNA transcript to yield the immediate precursors to the large and small rRNAs (23S and 16S). Processes some mRNAs, and tRNAs when they are encoded in the rRNA operon. Processes pre-crRNA and tracrRNA of type II CRISPR loci if present in the organism. This chain is Ribonuclease 3, found in Streptococcus pneumoniae (strain Hungary19A-6).